Consider the following 136-residue polypeptide: Single-stranded DNA-binding protein 1 (136 aa).

The 106-residue stretch at 4–109 folds into the SSB domain; the sequence is LNKMQLIGNL…IMAKEMQMLG (106 aa). Positions 109 to 136 are disordered; the sequence is GKKQDNNKVGNARHGDALPADEDDYYDF. A compositionally biased stretch (acidic residues) spans 127–136; that stretch reads PADEDDYYDF.

Homotetramer.

The polypeptide is Single-stranded DNA-binding protein 1 (ssb1) (Xylella fastidiosa (strain 9a5c)).